Here is a 698-residue protein sequence, read N- to C-terminus: Quillaic acid 3-O-glycosyltransferase CSL1 (698 aa).

Residues 14 to 34 traverse the membrane as a helical segment; that stretch reads ALLSRLHILFHSALVASVFYY. An N-linked (GlcNAc...) asparagine glycan is attached at N38. The chain crosses the membrane as a helical span at residues 42–62; it reads GPAWALMTFAELTLAFIWALT. 2 residues coordinate UDP-alpha-D-glucose: K99 and E100. D129 is an active-site residue. N-linked (GlcNAc...) asparagine glycosylation occurs at N317. The active site involves S436. 6 helical membrane-spanning segments follow: residues 478 to 498, 508 to 528, 546 to 566, 581 to 601, 636 to 656, and 669 to 689; these read WTSG…YAMS, YAYF…GVVL, WLLA…YEVL, IWII…MLNK, MFMV…FGGL, and FAQL…MEEI.

Belongs to the glycosyltransferase 2 family. Plant cellulose synthase-like G subfamily. Mainly expressed in flowers and flower buds and, to a lesser extent, in leaves, stems and roots.

It is found in the golgi apparatus membrane. Its pathway is secondary metabolite biosynthesis; terpenoid biosynthesis. Its function is as follows. Component of the oleanane-type triterpene saponins (e.g. saponarioside A and saponarioside B) biosynthetic pathway, leading to the production of natural products with detergent properties used as traditional sources of soap. Glycosyltransferase that mediates the conversion of quillaic acid (QA) to QA-mono via the initiation of the C-3 sugar chain. This is Quillaic acid 3-O-glycosyltransferase CSL1 from Saponaria officinalis (Common soapwort).